Here is a 425-residue protein sequence, read N- to C-terminus: uncharacterized protein (425 aa).

It to K.pneumoniae SorE.

This is an uncharacterized protein from Escherichia coli (strain K12).